The chain runs to 394 residues: Gap junction gamma-1 protein (394 aa).

The Cytoplasmic segment spans residues 1–22; it reads MSWSFLTRLLEEIHNHSTFVGK. A helical membrane pass occupies residues 23 to 45; it reads IWLSVLIVFRIVLTAVGGESIYY. At 46 to 75 the chain is on the extracellular side; the sequence is DEQSKFVCNTEQPGCENVCYDAFAPLSHVR. A helical transmembrane segment spans residues 76 to 95; sequence FWVFQIILVATPSVMYLGYA. The Cytoplasmic portion of the chain corresponds to 96 to 176; sequence IHKIARMVEH…RRIREDGLMR (81 aa). Residues 177–199 traverse the membrane as a helical segment; sequence IYVLQLLVRATFEVGFLIGQYLL. At 200-229 the chain is on the extracellular side; that stretch reads YGFEVSPVFVCSRKPCPHKIDCFISRPTEK. A helical transmembrane segment spans residues 230–252; it reads TIFLLIMYGVSCMCLLLNVWEML. Residues 253 to 394 lie on the Cytoplasmic side of the membrane; it reads HLGFGTIRDT…SGDGKNSVWI (142 aa). Residues 354-394 are disordered; that stretch reads IQAYNNQNNPGSSSREKKSKAGSNKSSASSKSGDGKNSVWI. A compositionally biased stretch (polar residues) spans 356-366; it reads AYNNQNNPGSS. Positions 374 to 394 are enriched in low complexity; that stretch reads AGSNKSSASSKSGDGKNSVWI.

Belongs to the connexin family. Gamma-type subfamily. A connexon is composed of a hexamer of connexins. Mostly in heart and stomach.

The protein localises to the cell membrane. It is found in the cell junction. It localises to the gap junction. Its function is as follows. One gap junction consists of a cluster of closely packed pairs of transmembrane channels, the connexons, through which materials of low MW diffuse from one cell to a neighboring cell. This chain is Gap junction gamma-1 protein (GJC1), found in Gallus gallus (Chicken).